Here is a 492-residue protein sequence, read N- to C-terminus: Malonyl-CoA decarboxylase, mitochondrial (492 aa).

The tract at residues 1–28 (MRGLGPGLRARRLLPLRSPPRPPGPRGR) is disordered. A mitochondrion-targeting transit peptide spans 1-38 (MRGLGPGLRARRLLPLRSPPRPPGPRGRRLCGGLAASA). The tract at residues 39-189 (MDELLRRAVP…VLKSMLSEWF (151 aa)) is alpha-helical domain. N6-acetyllysine is present on Lys-58. Lys-167 carries the post-translational modification N6-acetyllysine; alternate. Lys-167 carries the N6-succinyllysine; alternate modification. The catalytic domain stretch occupies residues 190–492 (SSGFLNLERV…VAQFQNNSKL (303 aa)). Residue Lys-210 is modified to N6-acetyllysine. Lys-221 carries the N6-succinyllysine modification. 298 to 304 (QGVELGT) provides a ligand contact to malonyl-CoA. Lys-316 carries the N6-acetyllysine modification. Residue Ser-328 coordinates malonyl-CoA. The Proton acceptor role is filled by Ser-328. Residue Lys-385 is modified to N6-acetyllysine; alternate. Lys-385 carries the N6-succinyllysine; alternate modification. At Lys-388 the chain carries N6-acetyllysine. His-422 contributes to the malonyl-CoA binding site. Residue His-422 is the Proton donor of the active site. An N6-acetyllysine mark is found at Lys-441 and Lys-471. A Microbody targeting signal motif is present at residues 490–492 (SKL).

Homotetramer. Dimer of dimers. The two subunits within a dimer display conformational differences suggesting that at any given moment, only one of the two subunits is competent for malonyl-CoA binding and catalytic activity. Under oxidizing conditions, can form disulfide-linked homotetramers (in vitro). Associates with the peroxisomal targeting signal receptor PEX5. Interchain disulfide bonds may form in peroxisomes (Potential). Interchain disulfide bonds are not expected to form in the reducing environment of the cytoplasm and mitochondria. Post-translationally, acetylation at Lys-471 activates malonyl-CoA decarboxylase activity. Deacetylation at Lys-471 by SIRT4 represses activity, leading to promote lipogenesis.

Its subcellular location is the cytoplasm. The protein resides in the mitochondrion matrix. The protein localises to the peroxisome. It localises to the peroxisome matrix. It carries out the reaction malonyl-CoA + H(+) = acetyl-CoA + CO2. It participates in metabolic intermediate biosynthesis; acetyl-CoA biosynthesis; acetyl-CoA from malonyl-CoA: step 1/1. With respect to regulation, malonyl-CoA decarboxylase activity does not require any cofactors or divalent metal ions. Catalyzes the conversion of malonyl-CoA to acetyl-CoA. In the fatty acid biosynthesis MCD selectively removes malonyl-CoA and thus assures that methyl-malonyl-CoA is the only chain elongating substrate for fatty acid synthase and that fatty acids with multiple methyl side chains are produced. In peroxisomes it may be involved in degrading intraperoxisomal malonyl-CoA, which is generated by the peroxisomal beta-oxidation of odd chain-length dicarboxylic fatty acids. Plays a role in the metabolic balance between glucose and lipid oxidation in muscle independent of alterations in insulin signaling. Plays a role in controlling the extent of ischemic injury by promoting glucose oxidation. This is Malonyl-CoA decarboxylase, mitochondrial from Mus musculus (Mouse).